The primary structure comprises 484 residues: Neuronal acetylcholine receptor subunit alpha-9 (484 aa).

Residues 1 to 27 form the signal peptide; sequence MKRNNLSSFYVSLWLLFTATMLQAVES. The Extracellular portion of the chain corresponds to 28–240; the sequence is AKGKYAQMLF…FTLILKRKSS (213 aa). Asn59 carries an N-linked (GlcNAc...) asparagine glycan. Residues Cys157 and Cys171 are joined by a disulfide bond. The N-linked (GlcNAc...) asparagine glycan is linked to Asn172. Residues Ser193 and Asp195 each coordinate Na(+). Cys221 and Cys222 are joined by a disulfide. Transmembrane regions (helical) follow at residues 241 to 261, 271 to 291, and 305 to 325; these read FYIFNLLLPCILISFLAPLGF, VSLGVTVLLALTVFQLMVAEI, and YIATMTMITASTALTIIIMNV. The Cytoplasmic segment spans residues 326–462; it reads HHCGSEAKPV…WKKVAKVMDR (137 aa). The segment at 364-395 is disordered; it reads RREKEQEHRLEGGDMCRGGDGKSHLSSRNDDS. A helical transmembrane segment spans residues 463 to 483; that stretch reads FFMWIFFIMVFFMSVLIIGKA.

It belongs to the ligand-gated ion channel (TC 1.A.9) family. Acetylcholine receptor (TC 1.A.9.1) subfamily. Alpha-9/CHRNA9 sub-subfamily. As to quaternary structure, forms homo- or heteropentameric channels in conjunction with CHRNA10. The native outer hair cell receptor is composed of CHRNA9:CHRNA10 heterooligomers. Found in the stoichiometric form (CHRNA9)2:(CHRNA10)3. In terms of tissue distribution, expressed in hair cells of the cochlea (at protein level). Expressed in hair cells of the cochlea.

The protein localises to the synaptic cell membrane. It is found in the cell membrane. The catalysed reaction is Ca(2+)(in) = Ca(2+)(out). It catalyses the reaction K(+)(in) = K(+)(out). It carries out the reaction Na(+)(in) = Na(+)(out). The enzyme catalyses Mg(2+)(in) = Mg(2+)(out). Its activity is regulated as follows. Activated by a myriad of ligands such as acetylcholine. AChR activity is inhibited by the antagonist alpha-conotoxins RgIA and GeXXA, small disulfide-constrained peptides from cone snails. Component of neuronal acetylcholine receptors (nAChRs) that function as pentameric, ligand-gated cation channels with high calcium permeability among other activities. nAChRs are excitatory neurotrasnmitter receptors formed by a collection of nAChR subunits known to mediate synaptic transmission in the nervous system and the neuromuscular junction. Each nAchR subunit confers differential attributes to channel properties, including activation, deactivation and desensitization kinetics, pH sensitivity, cation permeability, and binding to allosteric modulators. Forms either homopentamers or heteropentamers with CHRNA10. Expressed in the inner ear, in sympathetic neurons and in other non-neuronal cells, such as skin keratinocytes and lymphocytes. The channel is permeable to a range of divalent cations including calcium, the influx of which may activate a potassium current which hyperpolarizes the cell membrane. The chain is Neuronal acetylcholine receptor subunit alpha-9 (CHRNA9) from Gallus gallus (Chicken).